Reading from the N-terminus, the 303-residue chain is Ribonucleoside-diphosphate reductase small subunit (303 aa).

3 residues coordinate Fe cation: D60, E90, and H93. Y97 is a catalytic residue. A helical membrane pass occupies residues 147–167; the sequence is LLMILIEGIFFASSFASISYL. E153, E187, and H190 together coordinate Fe cation.

Belongs to the ribonucleoside diphosphate reductase small chain family. Heterotetramer composed of a homodimer of the large subunit (R1) and a homodimer of the small subunit (R2). Larger multisubunit protein complex are also active, composed of (R1)n(R2)n. It depends on Fe cation as a cofactor.

It localises to the host membrane. It catalyses the reaction a 2'-deoxyribonucleoside 5'-diphosphate + [thioredoxin]-disulfide + H2O = a ribonucleoside 5'-diphosphate + [thioredoxin]-dithiol. Ribonucleoside-diphosphate reductase holoenzyme provides the precursors necessary for viral DNA synthesis. Allows virus growth in non-dividing cells, as well as reactivation from latency in infected hosts. Catalyzes the biosynthesis of deoxyribonucleotides from the corresponding ribonucleotides. In Suid herpesvirus 1 (strain Kaplan) (SuHV-1), this protein is Ribonucleoside-diphosphate reductase small subunit.